Reading from the N-terminus, the 158-residue chain is Transcription elongation factor GreA (158 aa).

Positions 4–75 (EKTYPMTQEG…TQLENMIRNA (72 aa)) form a coiled coil.

Belongs to the GreA/GreB family.

Functionally, necessary for efficient RNA polymerase transcription elongation past template-encoded arresting sites. The arresting sites in DNA have the property of trapping a certain fraction of elongating RNA polymerases that pass through, resulting in locked ternary complexes. Cleavage of the nascent transcript by cleavage factors such as GreA or GreB allows the resumption of elongation from the new 3'terminus. GreA releases sequences of 2 to 3 nucleotides. The chain is Transcription elongation factor GreA from Bacillus anthracis (strain A0248).